The following is a 352-amino-acid chain: UDP-N-acetylglucosamine--N-acetylmuramyl-(pentapeptide) pyrophosphoryl-undecaprenol N-acetylglucosamine transferase 2 (352 aa).

Residues 11 to 13 (SAG), Arg-164, Ser-194, and Gln-289 contribute to the UDP-N-acetyl-alpha-D-glucosamine site.

This sequence belongs to the glycosyltransferase 28 family. MurG subfamily.

It is found in the cell membrane. The catalysed reaction is di-trans,octa-cis-undecaprenyl diphospho-N-acetyl-alpha-D-muramoyl-L-alanyl-D-glutamyl-meso-2,6-diaminopimeloyl-D-alanyl-D-alanine + UDP-N-acetyl-alpha-D-glucosamine = di-trans,octa-cis-undecaprenyl diphospho-[N-acetyl-alpha-D-glucosaminyl-(1-&gt;4)]-N-acetyl-alpha-D-muramoyl-L-alanyl-D-glutamyl-meso-2,6-diaminopimeloyl-D-alanyl-D-alanine + UDP + H(+). Its pathway is cell wall biogenesis; peptidoglycan biosynthesis. Functionally, cell wall formation. Catalyzes the transfer of a GlcNAc subunit on undecaprenyl-pyrophosphoryl-MurNAc-pentapeptide (lipid intermediate I) to form undecaprenyl-pyrophosphoryl-MurNAc-(pentapeptide)GlcNAc (lipid intermediate II). The chain is UDP-N-acetylglucosamine--N-acetylmuramyl-(pentapeptide) pyrophosphoryl-undecaprenol N-acetylglucosamine transferase 2 from Bacillus thuringiensis subsp. konkukian (strain 97-27).